The sequence spans 443 residues: Thymidine phosphorylase (443 aa).

Belongs to the thymidine/pyrimidine-nucleoside phosphorylase family. As to quaternary structure, homodimer.

It carries out the reaction thymidine + phosphate = 2-deoxy-alpha-D-ribose 1-phosphate + thymine. It participates in pyrimidine metabolism; dTMP biosynthesis via salvage pathway; dTMP from thymine: step 1/2. The enzymes which catalyze the reversible phosphorolysis of pyrimidine nucleosides are involved in the degradation of these compounds and in their utilization as carbon and energy sources, or in the rescue of pyrimidine bases for nucleotide synthesis. The chain is Thymidine phosphorylase from Shewanella baltica (strain OS155 / ATCC BAA-1091).